The following is a 252-amino-acid chain: 5-oxoprolinase subunit A (252 aa).

Belongs to the LamB/PxpA family. As to quaternary structure, forms a complex composed of PxpA, PxpB and PxpC.

The catalysed reaction is 5-oxo-L-proline + ATP + 2 H2O = L-glutamate + ADP + phosphate + H(+). Functionally, catalyzes the cleavage of 5-oxoproline to form L-glutamate coupled to the hydrolysis of ATP to ADP and inorganic phosphate. This Photorhabdus laumondii subsp. laumondii (strain DSM 15139 / CIP 105565 / TT01) (Photorhabdus luminescens subsp. laumondii) protein is 5-oxoprolinase subunit A.